The primary structure comprises 373 residues: MDTLEEVTWANGSTALPPPLAPNISVPHRCLLLLYEDIGTSRVRYWDLLLLIPNVLFLIFLLWKLPSARAKIRITSSPIFITFYILVFVVALVGIARAVVSMTVSTSNAATVADKILWEITRFFLLAIELSVIILGLAFGHLESKSSIKRVLAITTVLSLAYSVTQGTLEILYPDAHLSAEDFNIYGHGGRQFWLVSSCFFFLVYSLVVILPKTPLKERISLPSRRSFYVYAGILALLNLLQGLGSVLLCFDIIEGLCCVDATTFLYFSFFAPLIYVAFLRGFFGSEPKILFSYKCQVDETEEPDVHLPQPYAVARREGLEAAGAAGASAASYSSTQFDSAGGVAYLDDIASMPCHTGSINSTDSERWKAINA.

N-linked (GlcNAc...) asparagine glycosylation is found at N11 and N23. 7 helical membrane passes run 48-68 (LLLL…LPSA), 76-96 (SSPI…VGIA), 123-143 (FFLL…GHLE), 151-171 (VLAI…TLEI), 192-212 (QFWL…VILP), 234-254 (ILAL…FDII), and 265-285 (FLYF…GFFG). N361 carries N-linked (GlcNAc...) asparagine glycosylation.

This sequence belongs to the UPF0359 family. As to expression, ubiquitous, with higher levels in heart, placenta and kidney.

The protein resides in the membrane. The protein is Transmembrane protein adipocyte-associated 1 (TPRA1) of Homo sapiens (Human).